Here is a 143-residue protein sequence, read N- to C-terminus: MAIERTFSIIKPDAVAKNHIGAIYNRFESAGLKIIASKMVHLTKEQAEGFYAEHSARPFFGALVSFMTSGPVMVQVLEGENAVLANREIMGATNPAEAARGTLRGDYAASIDENAVHGSDALESAAREIAYFFSADEVCPRTR.

Residues lysine 11, phenylalanine 59, arginine 87, threonine 93, arginine 104, and asparagine 114 each contribute to the ATP site. The active-site Pros-phosphohistidine intermediate is the histidine 117.

Belongs to the NDK family. As to quaternary structure, homotetramer. Requires Mg(2+) as cofactor.

It localises to the cytoplasm. The catalysed reaction is a 2'-deoxyribonucleoside 5'-diphosphate + ATP = a 2'-deoxyribonucleoside 5'-triphosphate + ADP. The enzyme catalyses a ribonucleoside 5'-diphosphate + ATP = a ribonucleoside 5'-triphosphate + ADP. Major role in the synthesis of nucleoside triphosphates other than ATP. The ATP gamma phosphate is transferred to the NDP beta phosphate via a ping-pong mechanism, using a phosphorylated active-site intermediate. The chain is Nucleoside diphosphate kinase from Shewanella denitrificans (strain OS217 / ATCC BAA-1090 / DSM 15013).